A 121-amino-acid chain; its full sequence is UPF0344 protein BCE_1257 (121 aa).

A run of 4 helical transmembrane segments spans residues 6 to 26 (ITAW…YSAG), 38 to 58 (LMYI…VKTA), 65 to 85 (WYGL…MVLV), and 92 to 112 (PTGA…YLGL).

The protein belongs to the UPF0344 family.

The protein resides in the cell membrane. The protein is UPF0344 protein BCE_1257 of Bacillus cereus (strain ATCC 10987 / NRS 248).